We begin with the raw amino-acid sequence, 270 residues long: Myeloid leukemia factor 1 (270 aa).

Phosphoserine occurs at positions 6, 8, 32, and 34. Residues 50–125 (RARNRMGHED…VGDEPPKVFQ (76 aa)) form an interaction with COPS3 region. Disordered stretches follow at residues 127–148 (STQT…RDSD) and 221–247 (RSVA…AIEH). Basic and acidic residues predominate over residues 138-148 (KETRKALRDSD).

The protein belongs to the MLF family. In terms of assembly, interacts with CENPU. Also interacts with NRBP1/MADM, YWHAZ/14-3-3-zeta and HNRPUL2/MANP. NRBP1 recruits a serine kinase which phosphorylates both itself and MLF1. Phosphorylated MLF1 then binds to YWHAZ and is retained in the cytoplasm. Retained in the nucleus by binding to HNRPUL2. Binds to COPS3/CSN3 which is required for suppression of COP1 and activation of p53. Post-translationally, phosphorylation is required for binding to YWHAZ.

The protein resides in the cytoplasm. Its subcellular location is the nucleus. It is found in the cell projection. It localises to the cilium. The protein localises to the cytoskeleton. The protein resides in the cilium basal body. In terms of biological role, involved in lineage commitment of primary hemopoietic progenitors by restricting erythroid formation and enhancing myeloid formation. Interferes with erythropoietin-induced erythroid terminal differentiation by preventing cells from exiting the cell cycle through suppression of CDKN1B/p27Kip1 levels. Suppresses COP1 activity via CSN3 which activates p53 and induces cell cycle arrest. Binds DNA and affects the expression of a number of genes so may function as a transcription factor in the nucleus. In Bos taurus (Bovine), this protein is Myeloid leukemia factor 1 (MLF1).